We begin with the raw amino-acid sequence, 159 residues long: ATP synthase subunit b (159 aa).

The helical transmembrane segment at 7–27 (TFVWTIINFLLLLVVLSYFLF) threads the bilayer.

The protein belongs to the ATPase B chain family. In terms of assembly, F-type ATPases have 2 components, F(1) - the catalytic core - and F(0) - the membrane proton channel. F(1) has five subunits: alpha(3), beta(3), gamma(1), delta(1), epsilon(1). F(0) has three main subunits: a(1), b(2) and c(10-14). The alpha and beta chains form an alternating ring which encloses part of the gamma chain. F(1) is attached to F(0) by a central stalk formed by the gamma and epsilon chains, while a peripheral stalk is formed by the delta and b chains.

It localises to the cell membrane. Functionally, f(1)F(0) ATP synthase produces ATP from ADP in the presence of a proton or sodium gradient. F-type ATPases consist of two structural domains, F(1) containing the extramembraneous catalytic core and F(0) containing the membrane proton channel, linked together by a central stalk and a peripheral stalk. During catalysis, ATP synthesis in the catalytic domain of F(1) is coupled via a rotary mechanism of the central stalk subunits to proton translocation. In terms of biological role, component of the F(0) channel, it forms part of the peripheral stalk, linking F(1) to F(0). The polypeptide is ATP synthase subunit b (Clostridium novyi (strain NT)).